The following is a 107-amino-acid chain: U1-lycotoxin-Ls1b (107 aa).

An N-terminal signal peptide occupies residues 1–20 (MMKVLVVVALLPTLISYSSS). The propeptide occupies 21-41 (EGIDDLEADELLSLMANEQTR). 4 disulfides stabilise this stretch: Cys-44-Cys-59, Cys-51-Cys-68, Cys-58-Cys-86, and Cys-70-Cys-84.

It belongs to the neurotoxin 19 (CSTX) family. 04 (U1-Lctx) subfamily. Expressed by the venom gland.

It is found in the secreted. The polypeptide is U1-lycotoxin-Ls1b (Lycosa singoriensis (Wolf spider)).